An 80-amino-acid polypeptide reads, in one-letter code: Defensin-like protein 18 (80 aa).

An N-terminal signal peptide occupies residues 1-29 (MAKFCTTITLILVALVLFADFEAPTIVKA). Intrachain disulfides connect Cys-32–Cys-80, Cys-43–Cys-64, Cys-49–Cys-74, and Cys-53–Cys-76.

This sequence belongs to the DEFL family.

Its subcellular location is the secreted. Its function is as follows. Confers broad-spectrum resistance to pathogens. This is Defensin-like protein 18 (PDF1.5) from Arabidopsis thaliana (Mouse-ear cress).